Consider the following 546-residue polypeptide: Glucose-6-phosphate isomerase (546 aa).

Glu-355 functions as the Proton donor in the catalytic mechanism. Catalysis depends on residues His-386 and Lys-510.

It belongs to the GPI family.

It localises to the cytoplasm. It carries out the reaction alpha-D-glucose 6-phosphate = beta-D-fructose 6-phosphate. The protein operates within carbohydrate biosynthesis; gluconeogenesis. It functions in the pathway carbohydrate degradation; glycolysis; D-glyceraldehyde 3-phosphate and glycerone phosphate from D-glucose: step 2/4. Functionally, catalyzes the reversible isomerization of glucose-6-phosphate to fructose-6-phosphate. This chain is Glucose-6-phosphate isomerase, found in Buchnera aphidicola subsp. Cinara cedri (strain Cc).